We begin with the raw amino-acid sequence, 357 residues long: H-2 class I histocompatibility antigen, D-37 alpha chain (357 aa).

The N-terminal stretch at 1–20 is a signal peptide; the sequence is MLLFAHLLQLLVSATVPTQS. Residues 21–110 are alpha-1; the sequence is SPHSLRYFTT…LLGYYNQSND (90 aa). Over 21-304 the chain is Extracellular; that stretch reads SPHSLRYFTT…EPPPSTVSNM (284 aa). Residue Asn-106 is glycosylated (N-linked (GlcNAc...) asparagine). The segment at 111-202 is alpha-2; sequence ESHTLQWMYG…RLGNETLQRS (92 aa). Residues Cys-121 and Cys-184 are joined by a disulfide bond. Asn-196 carries an N-linked (GlcNAc...) asparagine glycan. Residues 203–294 are alpha-3; it reads DPPKAHVTHH…GLPEPLTLRW (92 aa). Residues 205 to 293 form the Ig-like C1-type domain; that stretch reads PKAHVTHHPR…EGLPEPLTLR (89 aa). The cysteines at positions 223 and 279 are disulfide-linked. The segment at 295 to 304 is connecting peptide; the sequence is EPPPSTVSNM. A helical membrane pass occupies residues 305–327; it reads VIIAVLVVLGAVIILGAVVAFVM. The Cytoplasmic portion of the chain corresponds to 328-357; the sequence is KRRRHIGVKGCYAHVLGSKSFQTSDWPQKA. Position 347 is a phosphoserine (Ser-347).

It belongs to the MHC class I family. In terms of assembly, heterodimer of an alpha chain and a beta chain (beta-2-microglobulin).

The protein resides in the membrane. In terms of biological role, involved in the presentation of foreign antigens to the immune system. The sequence is that of H-2 class I histocompatibility antigen, D-37 alpha chain (H2-T23) from Mus musculus (Mouse).